The following is a 215-amino-acid chain: CASP-like protein 1U3 (215 aa).

Residues 1–13 (MHDEEKKEPKWVT) lie on the Cytoplasmic side of the membrane. Residues 14-34 (AVSIAGRIAGMGLAVAAAVLM) form a helical membrane-spanning segment. At 35–68 (STASQCTVYYAAPAASAYGGAARARTVTYSDFPP) the chain is on the extracellular side. A helical membrane pass occupies residues 69 to 89 (FVFLVGAASIAAFLEAIAIFL). Residues 90–105 (VVWKKGKDKTTKVLMP) lie on the Cytoplasmic side of the membrane. A helical membrane pass occupies residues 106–126 (LLGVAVPALLYSATGAAFAAV). Topologically, residues 127–161 (SDMSYCSANGKRVSICAGSAAAGGGVSGGTNFCSQ) are extracellular. Residues 162–182 (VHIAVYLSLAAAVAVSVAEVV) form a helical membrane-spanning segment. The Cytoplasmic portion of the chain corresponds to 183-215 (RGLGGSASGGGSDSDSSSSSESGGCDHGCHHKH). The disordered stretch occupies residues 187–215 (GSASGGGSDSDSSSSSESGGCDHGCHHKH). The segment covering 195–205 (DSDSSSSSESG) has biased composition (low complexity).

This sequence belongs to the Casparian strip membrane proteins (CASP) family. In terms of assembly, homodimer and heterodimers.

Its subcellular location is the cell membrane. The polypeptide is CASP-like protein 1U3 (Sorghum bicolor (Sorghum)).